The following is a 197-amino-acid chain: Large ribosomal subunit protein bL25 (197 aa).

The protein belongs to the bacterial ribosomal protein bL25 family. CTC subfamily. Part of the 50S ribosomal subunit; part of the 5S rRNA/L5/L18/L25 subcomplex. Contacts the 5S rRNA. Binds to the 5S rRNA independently of L5 and L18.

This is one of the proteins that binds to the 5S RNA in the ribosome where it forms part of the central protuberance. This chain is Large ribosomal subunit protein bL25, found in Caulobacter vibrioides (strain ATCC 19089 / CIP 103742 / CB 15) (Caulobacter crescentus).